The chain runs to 311 residues: Malate dehydrogenase (311 aa).

NAD(+) contacts are provided by residues 7–13 (GAAGGIG) and Asp34. The substrate site is built by Arg81 and Arg87. Residues Asn94 and 117–119 (ITN) each bind NAD(+). Substrate-binding residues include Asn119 and Arg153. His177 acts as the Proton acceptor in catalysis. Met227 contributes to the NAD(+) binding site.

The protein belongs to the LDH/MDH superfamily. MDH type 1 family. As to quaternary structure, homodimer.

The catalysed reaction is (S)-malate + NAD(+) = oxaloacetate + NADH + H(+). Functionally, catalyzes the reversible oxidation of malate to oxaloacetate. In Aliivibrio fischeri (strain ATCC 700601 / ES114) (Vibrio fischeri), this protein is Malate dehydrogenase.